We begin with the raw amino-acid sequence, 553 residues long: Protein PNS1 (553 aa).

The span at 1-17 (MYGKSGPPPEGYVPQHP) shows a compositional bias: pro residues. The tract at residues 1 to 49 (MYGKSGPPPEGYVPQHPPAQGYAPHNPPPGYVHENPFQEPVPQGQEYSP) is disordered. Over 1–95 (MYGKSGPPPE…AGNRLKFNDW (95 aa)) the chain is Cytoplasmic. A helical membrane pass occupies residues 96–116 (PFTIIFLLTVGAFIAVAVLTL). Residues 117-143 (RGWSLSPTSNGSGIYDGDNTHTLNTNA) are Extracellular-facing. N-linked (GlcNAc...) asparagine glycosylation occurs at N126. Residues 144–164 (AILLLISCGVAVALSVFGLVL) form a helical membrane-spanning segment. Residues 165-170 (AGMYTK) lie on the Cytoplasmic side of the membrane. Residues 171–191 (FFIYAAMILNTVVGLGTAITY) form a helical membrane-spanning segment. The Extracellular segment spans residues 192 to 196 (LVLRH). Residues 197–217 (WSAGIVFMIFTILTAVCYWLM) form a helical membrane-spanning segment. At 218–243 (RSRIPFSVAVLRTVMSVMKKHPQTWL) the chain is on the cytoplasmic side. A helical membrane pass occupies residues 244 to 264 (VSLLGTIVSAAFSVIFSVVLV). The Extracellular segment spans residues 265–288 (ATYIKYDPKSENGGCDVSGGSCSR). A helical transmembrane segment spans residues 289-309 (GKLIGILVLVFFCGFYISEVI). The Cytoplasmic portion of the chain corresponds to 310–346 (RNVIHCTIAGIYGCWYYFSKSDQGMPRWPAFGSLKRA). The chain crosses the membrane as a helical span at residues 347–367 (LTTSFGSICFGSLIVSLIQLL). Residues 368-385 (RQIIQLLRNGIISGISDS) are Extracellular-facing. A helical transmembrane segment spans residues 386–406 (GWMQCLWLILDAVVGVFEWMA). Residues 407–450 (EYFNHYAYCFIALYGKPYLRAAKETWHMLREKGIDALINDNLIN) are Cytoplasmic-facing. A helical transmembrane segment spans residues 451-471 (LALGFYTLFVGYTTALFSYLF). The Extracellular portion of the chain corresponds to 472–483 (LRFTKPDYNSGG). Residues 484–504 (GFNAVLMAFSFLIAIQLTHVA) traverse the membrane as a helical segment. Residues 505–553 (TETIRSGTATFFVALGNDPEIFRVSYPQRFDEIFRAYPDVLNKLSHQHV) are Cytoplasmic-facing.

This sequence belongs to the CTL (choline transporter-like) family.

It localises to the cell membrane. Its function is as follows. Probably involved in transport through the plasma membrane. The polypeptide is Protein PNS1 (PNS1) (Eremothecium gossypii (strain ATCC 10895 / CBS 109.51 / FGSC 9923 / NRRL Y-1056) (Yeast)).